The following is a 101-amino-acid chain: Co-chaperonin GroES (101 aa).

Belongs to the GroES chaperonin family. Heptamer of 7 subunits arranged in a ring. Interacts with the chaperonin GroEL.

The protein resides in the cytoplasm. In terms of biological role, together with the chaperonin GroEL, plays an essential role in assisting protein folding. The GroEL-GroES system forms a nano-cage that allows encapsulation of the non-native substrate proteins and provides a physical environment optimized to promote and accelerate protein folding. GroES binds to the apical surface of the GroEL ring, thereby capping the opening of the GroEL channel. This is Co-chaperonin GroES from Lawsonia intracellularis.